Here is a 525-residue protein sequence, read N- to C-terminus: Peptide chain release factor 3 (525 aa).

The tr-type G domain maps to 8 to 276 (AMRRTFAIIS…AFVKEAPPPQ (269 aa)). Residues 17 to 24 (SHPDAGKT), 85 to 89 (DTPGH), and 139 to 142 (NKMD) contribute to the GTP site.

The protein belongs to the TRAFAC class translation factor GTPase superfamily. Classic translation factor GTPase family. PrfC subfamily.

It is found in the cytoplasm. Its function is as follows. Increases the formation of ribosomal termination complexes and stimulates activities of RF-1 and RF-2. It binds guanine nucleotides and has strong preference for UGA stop codons. It may interact directly with the ribosome. The stimulation of RF-1 and RF-2 is significantly reduced by GTP and GDP, but not by GMP. The protein is Peptide chain release factor 3 of Coxiella burnetii (strain CbuK_Q154) (Coxiella burnetii (strain Q154)).